A 471-amino-acid polypeptide reads, in one-letter code: Vanillate/3-O-methylgallate O-demethylase (471 aa).

Tyrosine 31 contributes to the substrate binding site. Residue glutamine 57 coordinates (6S)-5,6,7,8-tetrahydrofolate. Histidine 60 contacts substrate. Residues glutamine 93 and valine 120 each contribute to the (6S)-5,6,7,8-tetrahydrofolate site. Position 122 (arginine 122) interacts with substrate. (6S)-5,6,7,8-tetrahydrofolate is bound by residues glutamine 165 and glutamate 215. 247 to 250 (YPSN) is a substrate binding site. Tryptophan 256 contacts (6S)-5,6,7,8-tetrahydrofolate.

The protein belongs to the GcvT family. In terms of assembly, homodimer.

It catalyses the reaction vanillate + (6S)-5,6,7,8-tetrahydrofolate = (6S)-5-methyl-5,6,7,8-tetrahydrofolate + 3,4-dihydroxybenzoate. The catalysed reaction is 3-O-methylgallate + (6S)-5,6,7,8-tetrahydrofolate = 3,4,5-trihydroxybenzoate + (6S)-5-methyl-5,6,7,8-tetrahydrofolate. The protein operates within secondary metabolite metabolism; lignin degradation. Its function is as follows. Involved in the catabolism of vanillate and syringate. Catalyzes the transfer of a methyl moiety from vanillate or 3-O-methylgallate (3MGA) to tetrahydrofolate, forming protocatechuate (PCA) or gallate, respectively, and methyl-tetrahydrofolate. Has similar activities with both substrates. Cannot use syringate. Uses an ordered, sequential kinetic mechanism. The chain is Vanillate/3-O-methylgallate O-demethylase from Sphingobium sp. (strain NBRC 103272 / SYK-6).